Consider the following 558-residue polypeptide: Potassium-transporting ATPase potassium-binding subunit 1 (558 aa).

12 helical membrane-spanning segments follow: residues 1–21 (MEIILFLTMMVMITYVFSGYL), 66–86 (FNGFMGFITFVLLIVQQWLFL), 127–147 (MIVMTYLMFTSSASGYAVCIA), 166–186 (IVRFIVRVLLPLSCLISILLM), 245–265 (IWSNFIEMGSMMLLPMSMLFL), 281–301 (ALILFVAMFFIFIAILTLTMW), 327–347 (FGAGLSALFTVITTAFTTGSV), 354–374 (LTPIGGLGPMVLMMLNVVFGG), 377–397 (VGLMNLLIFVLLTVFICSLMV), 416–436 (IVLVFLIHPILILVFSALAFM), 482–502 (ISTGIIMLLSRYIPIILQLMI), and 531–551 (IVFIVLLSGLTFIPVLLLGPI).

Belongs to the KdpA family. As to quaternary structure, the system is composed of three essential subunits: KdpA, KdpB and KdpC.

Its subcellular location is the cell membrane. In terms of biological role, part of the high-affinity ATP-driven potassium transport (or Kdp) system, which catalyzes the hydrolysis of ATP coupled with the electrogenic transport of potassium into the cytoplasm. This subunit binds the extracellular potassium ions and delivers the ions to the membrane domain of KdpB through an intramembrane tunnel. This is Potassium-transporting ATPase potassium-binding subunit 1 from Staphylococcus aureus (strain Mu50 / ATCC 700699).